A 335-amino-acid polypeptide reads, in one-letter code: Mycobacterial beta-ketoacyl-[acyl-carrier-protein] synthase III (335 aa).

Active-site residues include C122 and H258. Residues 259-263 (QANSR) are ACP-binding. Residue N289 is part of the active site.

Belongs to the thiolase-like superfamily. FabH family. In terms of assembly, homodimer.

Its subcellular location is the cytoplasm. The catalysed reaction is malonyl-[ACP] + dodecanoyl-CoA + H(+) = 3-oxotetradecanoyl-[ACP] + CO2 + CoA. It functions in the pathway lipid metabolism; fatty acid biosynthesis. The protein operates within lipid metabolism; mycolic acid biosynthesis. Functionally, catalyzes the condensation reaction of fatty acid synthesis by the addition to an acyl acceptor of two carbons from malonyl-ACP. Catalyzes the first condensation reaction which initiates fatty acid synthesis and may therefore play a role in governing the total rate of fatty acid production. Possesses both acetoacetyl-ACP synthase and acetyl transacylase activities. Its substrate specificity determines the biosynthesis of branched-chain and/or straight-chain of fatty acids. The sequence is that of Mycobacterial beta-ketoacyl-[acyl-carrier-protein] synthase III from Mycobacterium avium (strain 104).